The following is a 384-amino-acid chain: tRNA-specific 2-thiouridylase MnmA (384 aa).

ATP-binding positions include 29-36 (AMSGGVDS) and Leu55. The Nucleophile role is filled by Cys123. Residues Cys123 and Cys220 are joined by a disulfide bond. Gly147 is a binding site for ATP. Residues 169 to 171 (RDQ) form an interaction with tRNA region. Cys220 acts as the Cysteine persulfide intermediate in catalysis.

It belongs to the MnmA/TRMU family.

The protein localises to the cytoplasm. The catalysed reaction is S-sulfanyl-L-cysteinyl-[protein] + uridine(34) in tRNA + AH2 + ATP = 2-thiouridine(34) in tRNA + L-cysteinyl-[protein] + A + AMP + diphosphate + H(+). In terms of biological role, catalyzes the 2-thiolation of uridine at the wobble position (U34) of tRNA, leading to the formation of s(2)U34. This chain is tRNA-specific 2-thiouridylase MnmA, found in Dinoroseobacter shibae (strain DSM 16493 / NCIMB 14021 / DFL 12).